Consider the following 1203-residue polypeptide: Nitric oxide synthase 3 (1203 aa).

The disordered stretch occupies residues 1 to 71 (MGNLKSVAQE…PPEGPKFPRV (71 aa)). G2 carries N-myristoyl glycine lipidation. Residues C15 and C26 are each lipidated (S-palmitoyl cysteine). The span at 15–27 (CGLGLGLGLGLCG) shows a compositional bias: gly residues. A Phosphothreonine modification is found at T33. Pro residues predominate over residues 33 to 66 (TPAPEPSRAPASLLPPAPEHSPPSSPLTQPPEGP). Residues C94 and C99 each contribute to the Zn(2+) site. The tract at residues 98 to 486 (RCLGSLVFPR…PDPWKGSAAK (389 aa)) is interaction with NOSIP. S102 is a binding site for (6R)-L-erythro-5,6,7,8-tetrahydrobiopterin. Position 114 is a phosphoserine; by CDK5 (S114). Position 184 (C184) interacts with heme b. Q247, W356, Y357, and E361 together coordinate L-arginine. R365 lines the (6R)-L-erythro-5,6,7,8-tetrahydrobiopterin pocket. An L-arginine-binding site is contributed by N366. The (6R)-L-erythro-5,6,7,8-tetrahydrobiopterin site is built by A446, W447, and F460. Y475 is a binding site for heme b. A calmodulin-binding region spans residues 491–510 (TRKKTFKEVANAVKISASLM). At T495 the chain carries Phosphothreonine; by AMPK. Residues 520 to 703 (ATILYGSETG…AFRGWAQAAF (184 aa)) enclose the Flavodoxin-like domain. FMN contacts are provided by S526, E527, T528, R530, S572, and T573. Residues S615, S633, and S638 each carry the phosphoserine modification. The FMN site is built by S654, C661, E687, and Q691. An FAD-binding FR-type domain is found at 756 to 1002 (RKMFQATIRS…IRGAPSFRLP (247 aa)). NADP(+) is bound at residue R776. H798 is an FAD binding site. Phosphoserine is present on S836. FAD-binding residues include R938, Y940, S941, T956, A958, Y962, V975, C976, and S977. NADP(+) contacts are provided by T1016, R1049, S1078, R1079, K1085, Y1087, and Q1089. Residue T1175 is modified to Phosphothreonine. The residue at position 1177 (S1177) is a Phosphoserine; by AMPK. S1179 is modified (phosphoserine).

It belongs to the NOS family. As to quaternary structure, homodimer. Interacts with NOSIP and NOSTRIN. Interacts with HSP90AB1. Forms a complex with ASL, ASS1 and SLC7A1; the complex regulates cell-autonomous L-arginine synthesis and citrulline recycling while channeling extracellular L-arginine to nitric oxide synthesis pathway. Requires heme b as cofactor. The cofactor is FAD. FMN is required as a cofactor. It depends on (6R)-L-erythro-5,6,7,8-tetrahydrobiopterin as a cofactor. In terms of processing, phosphorylation by AMPK at Ser-1177 in the presence of Ca(2+)-calmodulin (CaM) activates activity. In absence of Ca(2+)-calmodulin, AMPK also phosphorylates Thr-495, resulting in inhibition of activity. Phosphorylation of Ser-114 by CDK5 reduces activity. As to expression, platelets, placenta, liver and kidney.

The protein localises to the cell membrane. It is found in the membrane. Its subcellular location is the caveola. It localises to the cytoplasm. The protein resides in the cytoskeleton. The protein localises to the golgi apparatus. It carries out the reaction 2 L-arginine + 3 NADPH + 4 O2 + H(+) = 2 L-citrulline + 2 nitric oxide + 3 NADP(+) + 4 H2O. With respect to regulation, stimulated by calcium/calmodulin. Inhibited by NOSIP and NOSTRIN. Produces nitric oxide (NO) which is implicated in vascular smooth muscle relaxation through a cGMP-mediated signal transduction pathway. NO mediates vascular endothelial growth factor (VEGF)-induced angiogenesis in coronary vessels and promotes blood clotting through the activation of platelets. Functionally, lacks eNOS activity, dominant-negative form that may down-regulate eNOS activity by forming heterodimers with isoform 1. This chain is Nitric oxide synthase 3, found in Homo sapiens (Human).